The sequence spans 158 residues: Protein Smg homolog (158 aa).

This sequence belongs to the Smg family.

This is Protein Smg homolog from Vibrio cholerae serotype O1 (strain ATCC 39315 / El Tor Inaba N16961).